Here is a 242-residue protein sequence, read N- to C-terminus: DNA repair protein RecO (242 aa).

This sequence belongs to the RecO family. In terms of assembly, monomer.

Involved in DNA repair and RecF pathway recombination. The chain is DNA repair protein RecO from Salmonella enteritidis PT4 (strain P125109).